The primary structure comprises 196 residues: Small ribosomal subunit protein uS4c (196 aa).

The S4 RNA-binding domain maps to 89 to 157 (MRLDNILFRL…VQNYIASSDP (69 aa)).

The protein belongs to the universal ribosomal protein uS4 family. In terms of assembly, part of the 30S ribosomal subunit. Contacts protein S5. The interaction surface between S4 and S5 is involved in control of translational fidelity.

It is found in the plastid. Its subcellular location is the chloroplast. In terms of biological role, one of the primary rRNA binding proteins, it binds directly to 16S rRNA where it nucleates assembly of the body of the 30S subunit. Its function is as follows. With S5 and S12 plays an important role in translational accuracy. The polypeptide is Small ribosomal subunit protein uS4c (rps4) (Elymus canadensis (Canada wild rye)).